Reading from the N-terminus, the 880-residue chain is Vacuole morphology and inheritance protein 14 (880 aa).

HEAT repeat units lie at residues 82 to 119 (RYLR…IAKG) and 243 to 280 (SYLP…EVDR). Residues 333–373 (SKPLSMETDDTKLSNTNETDDERHLTSQEQLLDSEATSQEP) form a disordered region. Over residues 359–372 (SQEQLLDSEATSQE) the composition is skewed to polar residues. HEAT repeat units lie at residues 388 to 425 (LNFP…ISPN), 429 to 466 (PFLS…LCSS), and 517 to 554 (KHND…DSND). Ser-767, Ser-805, and Ser-867 each carry phosphoserine. Positions 850–880 (EMESPNDNSSVILKDSGSLPFNRNVSDKLKK) are disordered.

This sequence belongs to the VAC14 family. In terms of assembly, component of the PI(3,5)P2 regulatory complex, composed of ATG18, FIG4, FAB1, VAC14 and VAC7. VAC14 nucleates the assembly of the complex and serves as a scaffold.

The protein resides in the vacuole membrane. Its function is as follows. The PI(3,5)P2 regulatory complex regulates both the synthesis and turnover of phosphatidylinositol 3,5-bisphosphate (PtdIns(3,5)P2). Regulates the synthesis of PtdIns(3,5)P2 by positive activation of FAB1 and by controlling FIG4 localization. Required for FIG4-mediated turnover of PtdIns(3,5)P2 after hyperosmotic shock. Essential for the control of trafficking of some proteins to the vacuole lumen via the multivesicular body (MVB), and for maintenance of vacuole size and acidity. The sequence is that of Vacuole morphology and inheritance protein 14 (VAC14) from Saccharomyces cerevisiae (strain ATCC 204508 / S288c) (Baker's yeast).